The sequence spans 688 residues: GTPase IMAP family member 8 (688 aa).

The interval threonine 22–glutamine 44 is disordered. Residues glycine 35–glutamine 44 are compositionally biased toward polar residues. AIG1-type G domains follow at residues threonine 46–serine 246, threonine 281–glutamate 471, and lysine 472–glycine 681. The tract at residues glycine 55–serine 62 is G1. GTP-binding positions include glycine 55–alanine 63 and serine 76. A G2 region spans residues methionine 82–arginine 86. The tract at residues aspartate 103 to aspartate 106 is G3. Residues threonine 171–aspartate 174 are G4. GTP is bound by residues arginine 172–aspartate 174 and asparagine 208. Residues asparagine 207–lysine 209 form a G5 region.

It belongs to the TRAFAC class TrmE-Era-EngA-EngB-Septin-like GTPase superfamily. AIG1/Toc34/Toc159-like paraseptin GTPase family. IAN subfamily. As to expression, spleen, thymus and T-cells. Greatly reduced in T-cells from lymphopenic rats.

Its subcellular location is the endoplasmic reticulum. It is found in the golgi apparatus. The protein localises to the mitochondrion. The protein resides in the cytoplasm. It localises to the cytosol. In terms of biological role, exerts an anti-apoptotic effect in the immune system and is involved in responses to infections. This is GTPase IMAP family member 8 (Gimap8) from Rattus norvegicus (Rat).